The primary structure comprises 443 residues: MREIVHIQGGQCGNQIGAKFWEVVSDEHGIDPTGTALGDSDLQLERINVYFNEATGSRYVPRAILMDLEPGTMDSVRSGPYGQIFRPDNFVFGQTGAGNNWAKGHYTEGAELIDSVLDVVRKEAESCDCLQGFQVCHSLGGGTGSGMGTLLISKIREEYPDRMMLTFSVVPSPKVSDTVVEPYNATLSVHQLVENADECMVLDNEALYDICFRTLKLTTPTFGDLNHLISAVMSGITCCLRFPGQLNADLRKLAVNLIPFPRLHFFMVGFTPLTSRGSQQYRALTVPELTQQMWDAKNMMCAADPRHGRYLTASALFRGRMSTKEVDEQMLNVQNKNSSYFVEWIPNNVKSSVCDIPPKGLKMSATFIGNSTAIQEMFKRVSEQFTAMFRRKAFLHWYTGEGMDEMEFTEAESNMNDLVSEYQQYQDASAEEEGEFGEEEEEN.

The GTP site is built by glutamine 11, glutamate 69, serine 138, glycine 142, threonine 143, glycine 144, asparagine 204, and asparagine 226. Residue glutamate 69 participates in Mg(2+) binding. A disordered region spans residues glutamate 421–asparagine 443. A compositionally biased stretch (acidic residues) spans serine 429–asparagine 443.

Belongs to the tubulin family. In terms of assembly, dimer of alpha and beta chains. A typical microtubule is a hollow water-filled tube with an outer diameter of 25 nm and an inner diameter of 15 nM. Alpha-beta heterodimers associate head-to-tail to form protofilaments running lengthwise along the microtubule wall with the beta-tubulin subunit facing the microtubule plus end conferring a structural polarity. Microtubules usually have 13 protofilaments but different protofilament numbers can be found in some organisms and specialized cells. It depends on Mg(2+) as a cofactor.

Its subcellular location is the cytoplasm. It localises to the cytoskeleton. Tubulin is the major constituent of microtubules, a cylinder consisting of laterally associated linear protofilaments composed of alpha- and beta-tubulin heterodimers. Microtubules grow by the addition of GTP-tubulin dimers to the microtubule end, where a stabilizing cap forms. Below the cap, tubulin dimers are in GDP-bound state, owing to GTPase activity of alpha-tubulin. This is Tubulin beta chain (TUBB1) from Polytomella agilis (Quadriflagellate alga).